Here is a 501-residue protein sequence, read N- to C-terminus: MLSQRVGILIIGVLATATFWLCRRYFQLRGIPGPFVARITNLCRVRWVGSRKSHEIHSRLHDQYGSVVRFGPNMVSVADPAAISVIYPARSGFLKGDFYHVFKSPDEPPDVFTAQDEGIHKTLRAPVAPYYSFSKLQSLETAIDNNIDRLFHQLDRKDSGDSTSLTTWLQAFAFDTVWAWMFTNPYGMLEMGSTEEKKTLESNWEIFQIIGPLSQSSTLRNLAGIINAILTALKIDSIPQLHKHTVSLIKSREEQFESSSEELNASDNVDMMTQLLLMKSKNSMIPPWTVSSLSLLNVFAGSDSTAVVMGTMWHNLLLHRDSMQCLYNELLEHEAQGSLTRPVPKWKEVRGLAYLDACLNEALRLHPPFCLPFERVVPDTGLSIGDYYLPPGTLVGMSPYVVGRYKPVFGQDADQWRPERWLECSPQDQRKMESSMITFGAGRRVCLGKNVAIMEIKKLIPAILLRYDIKLLDPTSFKVENSWFFRQEGLDVEMKKRDGSA.

A helical membrane pass occupies residues 5-22 (RVGILIIGVLATATFWLC). Cys446 serves as a coordination point for heme.

It belongs to the cytochrome P450 family. Requires heme as cofactor.

The protein localises to the membrane. Its pathway is secondary metabolite biosynthesis; terpenoid biosynthesis. Its function is as follows. Cytochrome P450 monooxygenase; part of the cluster that mediates the biosynthesis of shearones, diterpenoid pyrones (DPs) which are structurally diverse meroterpenoids consisting of a diterpene linked by a pyrone, and which may exhibit a range of bioactivities. Whitin the pathway, esdpH takes part in the molecular scaffold modification via the hydroxylation at C-6' and can transform shearone C into shearone E, shearone D into shearone F, and shearone H into shearone I, the latter being the final product of the pathway. The molecular scaffold is commonly biosynthesized by a series of enzymes including the non-reducing polyketide synthase (NR-PKS) esdpA that generates an alpha-pyrone; the prenyltransferase esdpC that attaches a geranylgeranyl pyrophosphate (GGPP) produced by the GGPP synthase (GGPPS) esdpD onto the pyrone unit; the FAD-dependent monooxygenase esdpE that converts an olefin on the diterpene unit into an epoxide; and the terpene cyclase esdpB that catalyzes the cyclization reactions to give the molecular backbone shearone A. In the modification steps, esdpF oxidizes the hydroxy group to a ketone at C-3 and esdpG then attaches hydroxy groups at both C-11 and C-12. After that, esdpI hydroxylates at C-20 and esdpH hydroxylates at C-6'. The ether bridge is generated by nucleophilic attack of the hydroxy group at C-20 to the carbonyl carbon at C-3. EsdpH can also functions prior to esdpI. The different combinations of these modification enzymes lead to the production of diverse shearone derivatives, shearone I being the end product of the pathway. The alpha-ketoglutarate-dependent dioxygenase esdpJ seems not to be involved in this pathway. The chain is Cytochrome P450 monooxygenase esdpH from Penicillium shearii (Eupenicillium shearii).